Here is a 381-residue protein sequence, read N- to C-terminus: MSRETTTEATPLILTDGGGGRRSVRRQGLREAARLLRHASSGRMMMREPSMLVREAAAEQLEERQSDWAYSKPVVVLDFVWNLAFVVVATAVLVLSSDENPNMPLRVWIIGYGLQCMMHMVCVCVEYRRRNSRRRRDLSPRSSSSSSSSSSSMDEEEGLGLSRNSDERYLELGQLENENNSFAKHLESANTMISFIWWVIGFYWVSSGGQELAQGSPQLYWLCIVFLGFDVFFVVFCVALACVIGIAVCCCLPCIIAVLYAVAEQEGASKEDIDQLTKFKFRKVGDTMKHTVDEEQGQGDSGGVMTECGTDSPVEHALPHEDAECCICLSAYEDETELRELPCGHHFHCGCVDKWLYINATCPLCKYNILKSSNYEEGEEV.

The tract at residues 1–23 (MSRETTTEATPLILTDGGGGRRS) is disordered. The next 2 membrane-spanning stretches (helical) occupy residues 74–94 (VVVL…AVLV) and 107–127 (VWII…CVEY). A disordered region spans residues 135 to 161 (RRDLSPRSSSSSSSSSSSMDEEEGLGL). Residues 140–152 (PRSSSSSSSSSSS) are compositionally biased toward low complexity. A coiled-coil region spans residues 170–194 (LELGQLENENNSFAKHLESANTMIS). 3 consecutive transmembrane segments (helical) span residues 189-209 (ANTM…SSGG), 224-244 (IVFL…ACVI), and 245-265 (GIAV…VAEQ). The RING-type; atypical zinc finger occupies 325–366 (CCICLSAYEDETELRELPCGHHFHCGCVDKWLYINATCPLCK).

The protein resides in the membrane. It catalyses the reaction S-ubiquitinyl-[E2 ubiquitin-conjugating enzyme]-L-cysteine + [acceptor protein]-L-lysine = [E2 ubiquitin-conjugating enzyme]-L-cysteine + N(6)-ubiquitinyl-[acceptor protein]-L-lysine.. It participates in protein modification; protein ubiquitination. Functionally, mediates E2-dependent protein ubiquitination. The sequence is that of E3 ubiquitin-protein ligase At1g63170 from Arabidopsis thaliana (Mouse-ear cress).